We begin with the raw amino-acid sequence, 917 residues long: MIASHLLAYFFTELNHDQVQKVDQYLYHMRLSDETLLEISKRFRKEMEKGLAATTHPTASVKMLPTFVRSTPDGTEHGEFLALDLGGTNFRVLRVRVTDNGLQKVEMENQIYAIPEDIMQGSGTQLFDHIAGCLANFMDKLQIKDKKLPLGFTFSFPCIQTKLDESFLVSWTKGFKSRGVEGRDVVTLIRKAIQRRGDFDIDIVAMVNDTVATMMTCGYDDQNCEIGLIVGMGSNACYMEEMRYIDTVEGDEGRMCINMEWGAFGDDGTLDDIRTEFDQEIDMGSLNPGQQLFEKMISGMYMGELVRLILVKMAKEELLFRGKLSPELLTTGRFETKDVSEIEGEKDGIQKAREVLVRLGMDPTQEDCVATHRICQIVSTRSASLCAATLAAVLQRIKENKGEERLRSTIGVDGSVYKKHPHFAKRLQKTVRRLVPNCDIRFLCSEDGSGKGAAMVTAVAYRLAYQHRARLKTLEPLKLSREQLLEVKRRMKVEMERGLSKETHASAPVKMLPTYVCATPDGTEKGDFLALDLGGTNFRVLLVRVRNGKRRGVEMHNKIYSIPQDIMHGTGDELFDHIVQCIADFLEYMGMKGVSLPLGFTFSFPCQQNRLDESILLKWTKGFKASGCEGEDVVTLLKEAIHRREEFDLDVVAVVNDTVGTMMTCGYEDPHCEVGLIVGTGSNACYMEEMRNVELVEGEEGRMCVNTEWGAFGDNGCLDDFCTEFDVAVDELSLNPGKQRFEKMMSGMYLGEIVRNILIDFTKRGLLFRGRISERLKTRGIFETKFLSQIESDCLALQQVRAILQHLGLESTCDDSIIVKEVCTVVAQRAAQLCGAGMAAVVDKIRENRGLDTLKVTVGVDGTLYKLHPHFAKVMRETVKDLAPKCDVSFLESEDGSGKGAALITAVACRIREAGQR.

M1 carries the N-acetylmethionine modification. A mitochondrial-binding peptide (MBP) region spans residues 1–16; the sequence is MIASHLLAYFFTELNH. Hexokinase domains follow at residues 16 to 458 and 464 to 906; these read HDQV…MVTA and AYQH…LITA. ATP contacts are provided by residues R30 and 84–89; that span reads DLGGTN. The segment at 73 to 207 is hexokinase small subdomain 1; that stretch reads DGTEHGEFLA…DFDIDIVAMV (135 aa). Residue 84 to 88 participates in D-glucose 6-phosphate binding; sequence DLGGT. Residues 155-156, 172-173, 208-209, N235, E260, and 291-294 each bind D-glucose; these read SF, TK, ND, and QLFE. Residues 208–447 form a hexokinase large subdomain 1 region; the sequence is NDTVATMMTC…CDIRFLCSED (240 aa). D209 is a D-glucose 6-phosphate binding site. 413–415 is a D-glucose 6-phosphate binding site; the sequence is DGS. 425 to 426 is a binding site for ATP; sequence KR. Residues S449 and 532–536 each bind D-glucose 6-phosphate; that span reads DLGGT. Residues 521–655 form a hexokinase small subdomain 2 region; the sequence is DGTEKGDFLA…EFDLDVVAVV (135 aa). Position 532-537 (532-537) interacts with ATP; it reads DLGGTN. D-glucose-binding positions include 603–604, 620–621, and 656–657; these read SF, TK, and ND. Residues 656–895 form a hexokinase large subdomain 2 region; sequence NDTVGTMMTC…CDVSFLESED (240 aa). Residues D657 and T680 each contribute to the D-glucose 6-phosphate site. T680 serves as a coordination point for ATP. D-glucose contacts are provided by residues 682 to 683, E708, and 739 to 742; these read SN and QRFE. ATP is bound by residues 747–748, 784–788, and 863–867; these read GM, TKFLS, and TLYKL. Residues 861 to 863 and S897 each bind D-glucose 6-phosphate; that span reads DGT.

This sequence belongs to the hexokinase family. As to quaternary structure, monomer. Interacts with TIGAR; the interaction increases hexokinase activity in a hypoxia- and HIF1A-dependent manner.

It is found in the mitochondrion outer membrane. The protein resides in the cytoplasm. It localises to the cytosol. It catalyses the reaction a D-hexose + ATP = a D-hexose 6-phosphate + ADP + H(+). The enzyme catalyses D-fructose + ATP = D-fructose 6-phosphate + ADP + H(+). It carries out the reaction D-glucose + ATP = D-glucose 6-phosphate + ADP + H(+). It participates in carbohydrate metabolism; hexose metabolism. It functions in the pathway carbohydrate degradation; glycolysis; D-glyceraldehyde 3-phosphate and glycerone phosphate from D-glucose: step 1/4. Its activity is regulated as follows. Hexokinase activity is specifically inhibited by 2,6-disubstituted glucosamines. In terms of biological role, catalyzes the phosphorylation of hexose, such as D-glucose and D-fructose, to hexose 6-phosphate (D-glucose 6-phosphate and D-fructose 6-phosphate, respectively). Mediates the initial step of glycolysis by catalyzing phosphorylation of D-glucose to D-glucose 6-phosphate. Plays a key role in maintaining the integrity of the outer mitochondrial membrane by preventing the release of apoptogenic molecules from the intermembrane space and subsequent apoptosis. The protein is Hexokinase-2 of Equus zebra (Mountain zebra).